Consider the following 430-residue polypeptide: Enolase (430 aa).

Gln164 contacts (2R)-2-phosphoglycerate. Glu206 serves as the catalytic Proton donor. The Mg(2+) site is built by Asp243, Glu288, and Asp315. (2R)-2-phosphoglycerate contacts are provided by Lys340, Arg369, Ser370, and Lys391. Lys340 (proton acceptor) is an active-site residue.

It belongs to the enolase family. Requires Mg(2+) as cofactor.

Its subcellular location is the cytoplasm. It localises to the secreted. The protein localises to the cell surface. It catalyses the reaction (2R)-2-phosphoglycerate = phosphoenolpyruvate + H2O. It participates in carbohydrate degradation; glycolysis; pyruvate from D-glyceraldehyde 3-phosphate: step 4/5. Its function is as follows. Catalyzes the reversible conversion of 2-phosphoglycerate (2-PG) into phosphoenolpyruvate (PEP). It is essential for the degradation of carbohydrates via glycolysis. The polypeptide is Enolase (Lysinibacillus sphaericus (strain C3-41)).